The chain runs to 668 residues: DNA ligase (668 aa).

NAD(+) contacts are provided by residues 35 to 39 (DQEYD), 84 to 85 (SL), and glutamate 115. Lysine 117 functions as the N6-AMP-lysine intermediate in the catalytic mechanism. Arginine 138, glutamate 172, lysine 288, and lysine 312 together coordinate NAD(+). Zn(2+) contacts are provided by cysteine 406, cysteine 409, cysteine 425, and cysteine 430. The 80-residue stretch at 589 to 668 (KLEGPLKGLV…EEFFDKYGES (80 aa)) folds into the BRCT domain.

The protein belongs to the NAD-dependent DNA ligase family. LigA subfamily. It depends on Mg(2+) as a cofactor. Mn(2+) serves as cofactor.

It catalyses the reaction NAD(+) + (deoxyribonucleotide)n-3'-hydroxyl + 5'-phospho-(deoxyribonucleotide)m = (deoxyribonucleotide)n+m + AMP + beta-nicotinamide D-nucleotide.. DNA ligase that catalyzes the formation of phosphodiester linkages between 5'-phosphoryl and 3'-hydroxyl groups in double-stranded DNA using NAD as a coenzyme and as the energy source for the reaction. It is essential for DNA replication and repair of damaged DNA. This Petrotoga mobilis (strain DSM 10674 / SJ95) protein is DNA ligase.